A 650-amino-acid polypeptide reads, in one-letter code: GATA zinc finger domain-containing protein 11 (650 aa).

Positions 16 to 79 are enriched in low complexity; that stretch reads LYNNTNTNSN…NSSNSLSSSF (64 aa). 4 disordered regions span residues 16-96, 111-181, 221-335, and 409-515; these read LYNN…SGYN, KRSN…TTPL, NNSN…NNNK, and RIFG…NKRK. Residues 116 to 129 are compositionally biased toward polar residues; the sequence is LDDNMSVPTLQNFT. 2 stretches are compositionally biased toward low complexity: residues 130–180 and 221–260; these read NNNN…PTTP and NNSN…NNNN. Polar residues predominate over residues 261-272; it reads QSIVPQSIHLQS. Positions 273-334 are enriched in low complexity; it reads TTPQIQPLSL…NNSYNTNNNN (62 aa). A compositionally biased stretch (basic residues) spans 425–434; that stretch reads RPRRFRKSKV. Over residues 442–511 the composition is skewed to low complexity; it reads HNNNNNNINN…GNGNTNSTNN (70 aa). Residues 522 to 547 form a GATA-type zinc finger; it reads CTSCGTTSSPEWRKGPAGNQSLCNAC. Residues 619 to 650 form a disordered region; that stretch reads QQQQQQQQQQQNHHHQQLQQQQQQQQQQQLHH.

Its function is as follows. Transcription factor that regulates morphogenetic cell movement during development. This Dictyostelium discoideum (Social amoeba) protein is GATA zinc finger domain-containing protein 11 (gtaK).